We begin with the raw amino-acid sequence, 338 residues long: Fructose-bisphosphate aldolase (338 aa).

Residues R50 and K138 each coordinate substrate. E179 acts as the Proton acceptor in catalysis. The Schiff-base intermediate with dihydroxyacetone-P role is filled by K221.

The protein belongs to the class I fructose-bisphosphate aldolase family.

It catalyses the reaction beta-D-fructose 1,6-bisphosphate = D-glyceraldehyde 3-phosphate + dihydroxyacetone phosphate. It participates in carbohydrate degradation; glycolysis; D-glyceraldehyde 3-phosphate and glycerone phosphate from D-glucose: step 4/4. This is Fructose-bisphosphate aldolase from Encephalitozoon cuniculi (strain GB-M1) (Microsporidian parasite).